A 117-amino-acid chain; its full sequence is Large ribosomal subunit protein uL22 (117 aa).

The protein belongs to the universal ribosomal protein uL22 family. As to quaternary structure, part of the 50S ribosomal subunit.

This protein binds specifically to 23S rRNA; its binding is stimulated by other ribosomal proteins, e.g. L4, L17, and L20. It is important during the early stages of 50S assembly. It makes multiple contacts with different domains of the 23S rRNA in the assembled 50S subunit and ribosome. Its function is as follows. The globular domain of the protein is located near the polypeptide exit tunnel on the outside of the subunit, while an extended beta-hairpin is found that lines the wall of the exit tunnel in the center of the 70S ribosome. The chain is Large ribosomal subunit protein uL22 from Staphylococcus epidermidis (strain ATCC 35984 / DSM 28319 / BCRC 17069 / CCUG 31568 / BM 3577 / RP62A).